Here is a 670-residue protein sequence, read N- to C-terminus: Probable potassium transport system protein Kup 1 (670 aa).

13 consecutive transmembrane segments (helical) span residues 14–34 (GAGF…SPLY), 58–78 (LSLI…WIAL), 101–121 (WLII…ALTP), 147–167 (LPIV…QRFG), 175–195 (FGPV…INLF), 196–216 (GDFS…LLSP), 220–240 (AGIF…ALYS), 252–272 (VSWP…GAWL), 294–314 (LIIF…QALI), 345–365 (LYIP…VVYF), 374–394 (AYGL…TVYL), 403–423 (VLVG…FAAS), and 427–447 (FMHG…VMAI).

Belongs to the HAK/KUP transporter (TC 2.A.72) family.

It localises to the cell membrane. The catalysed reaction is K(+)(in) + H(+)(in) = K(+)(out) + H(+)(out). Functionally, transport of potassium into the cell. Likely operates as a K(+):H(+) symporter. This chain is Probable potassium transport system protein Kup 1, found in Lactococcus lactis subsp. lactis (strain IL1403) (Streptococcus lactis).